Consider the following 361-residue polypeptide: Protein-L-isoaspartate O-methyltransferase domain-containing protein 2 (361 aa).

Gly2 carries the N-myristoyl glycine lipid modification. The active site involves Ser64. AdoMet binding motif stretches follow at residues 85–94, 160–164, and 181–191; these read LNLGSGTGYL, YDRVY, and LKVGGILVMPL. Residues 240-250 are BC-box; sequence VRSLQDLARIA. A disordered region spans residues 303 to 336; it reads SNPSDDNSCEDLEEERREEEEKTPPETKPDPPVN. The span at 309–320 shows a compositional bias: acidic residues; it reads NSCEDLEEERRE. Residues 321–331 are compositionally biased toward basic and acidic residues; that stretch reads EEEKTPPETKP. Residues 345 to 348 are CUL-box; that stretch reads LPLP.

Belongs to the methyltransferase superfamily. L-isoaspartyl/D-aspartyl protein methyltransferase family.

The protein resides in the cytoplasm. Functionally, may act as a substrate recognition component of an ECS (Elongin BC-CUL5-SOCS-box protein) E3 ubiquitin ligase complex which mediates the ubiquitination and subsequent proteasomal degradation of target proteins. May bind to the methyltransferase cofactor S-adenosylmethionine (AdoMet) via the N-terminal AdoMet binding motif, but probably does not display methyltransferase activity. The sequence is that of Protein-L-isoaspartate O-methyltransferase domain-containing protein 2 (PCMTD2) from Homo sapiens (Human).